A 489-amino-acid polypeptide reads, in one-letter code: Lysine--tRNA ligase (489 aa).

Glutamate 399 and glutamate 406 together coordinate Mg(2+).

This sequence belongs to the class-II aminoacyl-tRNA synthetase family. As to quaternary structure, homodimer. Requires Mg(2+) as cofactor.

Its subcellular location is the cytoplasm. The catalysed reaction is tRNA(Lys) + L-lysine + ATP = L-lysyl-tRNA(Lys) + AMP + diphosphate. The polypeptide is Lysine--tRNA ligase (Roseiflexus sp. (strain RS-1)).